The primary structure comprises 242 residues: 2-C-methyl-D-erythritol 4-phosphate cytidylyltransferase (242 aa).

The protein belongs to the IspD/TarI cytidylyltransferase family. IspD subfamily.

The enzyme catalyses 2-C-methyl-D-erythritol 4-phosphate + CTP + H(+) = 4-CDP-2-C-methyl-D-erythritol + diphosphate. Its pathway is isoprenoid biosynthesis; isopentenyl diphosphate biosynthesis via DXP pathway; isopentenyl diphosphate from 1-deoxy-D-xylulose 5-phosphate: step 2/6. Catalyzes the formation of 4-diphosphocytidyl-2-C-methyl-D-erythritol from CTP and 2-C-methyl-D-erythritol 4-phosphate (MEP). This chain is 2-C-methyl-D-erythritol 4-phosphate cytidylyltransferase, found in Halorhodospira halophila (strain DSM 244 / SL1) (Ectothiorhodospira halophila (strain DSM 244 / SL1)).